Consider the following 368-residue polypeptide: Endoglucanase (368 aa).

The N-terminal stretch at 1–21 (MNVLRSGIVTMLLLAAFSVQA) is a signal peptide. Glutamate 55 (proton donor) is an active-site residue. The Nucleophile role is filled by aspartate 116.

This sequence belongs to the glycosyl hydrolase 8 (cellulase D) family.

The protein resides in the secreted. The enzyme catalyses Endohydrolysis of (1-&gt;4)-beta-D-glucosidic linkages in cellulose, lichenin and cereal beta-D-glucans.. Its pathway is glycan metabolism; bacterial cellulose biosynthesis. Functionally, hydrolyzes carboxymethylcellulose. This is Endoglucanase (bcsZ) from Escherichia coli (strain K12).